The chain runs to 504 residues: Maturase K (504 aa).

The protein belongs to the intron maturase 2 family. MatK subfamily.

The protein resides in the plastid. The protein localises to the chloroplast. Functionally, usually encoded in the trnK tRNA gene intron. Probably assists in splicing its own and other chloroplast group II introns. The protein is Maturase K of Matthiola incana (Common stock).